Consider the following 188-residue polypeptide: Translation initiation factor IF-3 (188 aa).

It belongs to the IF-3 family. Monomer.

Its subcellular location is the cytoplasm. IF-3 binds to the 30S ribosomal subunit and shifts the equilibrium between 70S ribosomes and their 50S and 30S subunits in favor of the free subunits, thus enhancing the availability of 30S subunits on which protein synthesis initiation begins. The chain is Translation initiation factor IF-3 from Fusobacterium nucleatum subsp. nucleatum (strain ATCC 25586 / DSM 15643 / BCRC 10681 / CIP 101130 / JCM 8532 / KCTC 2640 / LMG 13131 / VPI 4355).